The primary structure comprises 592 residues: Aspartate--tRNA(Asp/Asn) ligase (592 aa).

L-aspartate is bound at residue E177. The segment at 201–204 is aspartate; that stretch reads QLFK. An L-aspartate-binding site is contributed by R223. Residues 223-225 and Q232 each bind ATP; that span reads RDE. H451 serves as a coordination point for L-aspartate. ATP is bound at residue E485. R492 contributes to the L-aspartate binding site. 537–540 provides a ligand contact to ATP; the sequence is GLDR.

Belongs to the class-II aminoacyl-tRNA synthetase family. Type 1 subfamily. Homodimer.

It is found in the cytoplasm. The catalysed reaction is tRNA(Asx) + L-aspartate + ATP = L-aspartyl-tRNA(Asx) + AMP + diphosphate. Its function is as follows. Aspartyl-tRNA synthetase with relaxed tRNA specificity since it is able to aspartylate not only its cognate tRNA(Asp) but also tRNA(Asn). Reaction proceeds in two steps: L-aspartate is first activated by ATP to form Asp-AMP and then transferred to the acceptor end of tRNA(Asp/Asn). The polypeptide is Aspartate--tRNA(Asp/Asn) ligase (Bacillus subtilis (strain 168)).